The chain runs to 453 residues: MKEKQFWNRILEFAQERLTRSMYDFYAIQAELIKVEENVATIFLPRSEMEMVWEKQLKDIIVVAGFEIYDAEITPHYIFTKPQDTTSSQVEEATNLTLYDYSPKLVSIPYSDTGLKEKYTFDNFIQGDGNVWAVSAALAVSEDLALTYNPLFIYGGPGLGKTHLLNAIGNEILKNIPNARVKYIPAESFINDFLDHLRLGEMEKFKKTYRSLDLLLIDDIQSLSGKKVATQEEFFNTFNALHDKQKQIVLTSDRSPKHLEGLEERLVTRFSWGLTQTITPPDFETRIAILQSKTEHLGYNFQSDTLEYLAGQFDSNVRDLEGAINDITLIARVKKIKDITIDIAAEAIRARKQDVSQMLVIPIDKIQTEVGNFYGVSIKEMKGSRRLQNIVLARQVAMYLSRELTDNSLPKIGKEFGGKDHTTVIHAHVKIKSLIDQDDNLRLEIESIKKKIK.

The tract at residues 1–74 (MKEKQFWNRI…GFEIYDAEIT (74 aa)) is domain I, interacts with DnaA modulators. Residues 74–113 (TPHYIFTKPQDTTSSQVEEATNLTLYDYSPKLVSIPYSDT) form a domain II region. Positions 114-331 (GLKEKYTFDN…GAINDITLIA (218 aa)) are domain III, AAA+ region. Positions 158, 160, 161, and 162 each coordinate ATP. Positions 332-453 (RVKKIKDITI…EIESIKKKIK (122 aa)) are domain IV, binds dsDNA.

This sequence belongs to the DnaA family. As to quaternary structure, oligomerizes as a right-handed, spiral filament on DNA at oriC.

The protein localises to the cytoplasm. Functionally, plays an essential role in the initiation and regulation of chromosomal replication. ATP-DnaA binds to the origin of replication (oriC) to initiate formation of the DNA replication initiation complex once per cell cycle. Binds the DnaA box (a 9 base pair repeat at the origin) and separates the double-stranded (ds)DNA. Forms a right-handed helical filament on oriC DNA; dsDNA binds to the exterior of the filament while single-stranded (ss)DNA is stabiized in the filament's interior. The ATP-DnaA-oriC complex binds and stabilizes one strand of the AT-rich DNA unwinding element (DUE), permitting loading of DNA polymerase. After initiation quickly degrades to an ADP-DnaA complex that is not apt for DNA replication. Binds acidic phospholipids. The chain is Chromosomal replication initiator protein DnaA from Streptococcus pneumoniae (strain Taiwan19F-14).